The sequence spans 237 residues: 5'-methylthioadenosine/S-adenosylhomocysteine nucleosidase (237 aa).

Glu12 acts as the Proton acceptor in catalysis. Residues Ala78, Ile152, and 173–174 contribute to the substrate site; that span reads ME. Asp197 acts as the Proton donor in catalysis.

It belongs to the PNP/UDP phosphorylase family. MtnN subfamily. As to quaternary structure, homodimer.

The catalysed reaction is S-adenosyl-L-homocysteine + H2O = S-(5-deoxy-D-ribos-5-yl)-L-homocysteine + adenine. The enzyme catalyses S-methyl-5'-thioadenosine + H2O = 5-(methylsulfanyl)-D-ribose + adenine. It carries out the reaction 5'-deoxyadenosine + H2O = 5-deoxy-D-ribose + adenine. The protein operates within amino-acid biosynthesis; L-methionine biosynthesis via salvage pathway; S-methyl-5-thio-alpha-D-ribose 1-phosphate from S-methyl-5'-thioadenosine (hydrolase route): step 1/2. In terms of biological role, catalyzes the irreversible cleavage of the glycosidic bond in both 5'-methylthioadenosine (MTA) and S-adenosylhomocysteine (SAH/AdoHcy) to adenine and the corresponding thioribose, 5'-methylthioribose and S-ribosylhomocysteine, respectively. Also cleaves 5'-deoxyadenosine, a toxic by-product of radical S-adenosylmethionine (SAM) enzymes, into 5-deoxyribose and adenine. Thus, is required for in vivo function of the radical SAM enzymes biotin synthase and lipoic acid synthase, that are inhibited by 5'-deoxyadenosine accumulation. This chain is 5'-methylthioadenosine/S-adenosylhomocysteine nucleosidase, found in Hamiltonella defensa subsp. Acyrthosiphon pisum (strain 5AT).